The primary structure comprises 296 residues: Probable lipid kinase YegS-like (296 aa).

The DAGKc domain occupies 1–130 (MPHTLLILNG…IDLAQVNGEH (130 aa)). Residues Thr37, 63–69 (GDGTINE), and Thr92 each bind ATP. Positions 212, 215, and 217 each coordinate Mg(2+). Residue Glu268 is the Proton acceptor of the active site.

It belongs to the diacylglycerol/lipid kinase family. YegS lipid kinase subfamily. Requires Mg(2+) as cofactor. It depends on Ca(2+) as a cofactor.

It is found in the cytoplasm. Functionally, probably phosphorylates lipids; the in vivo substrate is unknown. The sequence is that of Probable lipid kinase YegS-like from Yersinia pseudotuberculosis serotype I (strain IP32953).